Here is a 54-residue protein sequence, read N- to C-terminus: UPF0434 protein BCI_0256 (54 aa).

It belongs to the UPF0434 family.

In Baumannia cicadellinicola subsp. Homalodisca coagulata, this protein is UPF0434 protein BCI_0256.